A 309-amino-acid chain; its full sequence is HPr kinase/phosphorylase (309 aa).

Residues His-138 and Lys-159 contribute to the active site. Gly-153 to Ser-160 provides a ligand contact to ATP. Ser-160 contacts Mg(2+). Asp-177 serves as the catalytic Proton acceptor; for phosphorylation activity. Proton donor; for dephosphorylation activity. Positions Leu-201–Asn-210 are important for the catalytic mechanism of both phosphorylation and dephosphorylation. Glu-202 provides a ligand contact to Mg(2+). The active site involves Arg-243. Positions Pro-264–Arg-269 are important for the catalytic mechanism of dephosphorylation.

This sequence belongs to the HPrK/P family. In terms of assembly, homohexamer. Requires Mg(2+) as cofactor.

It catalyses the reaction [HPr protein]-L-serine + ATP = [HPr protein]-O-phospho-L-serine + ADP + H(+). The catalysed reaction is [HPr protein]-O-phospho-L-serine + phosphate + H(+) = [HPr protein]-L-serine + diphosphate. Functionally, catalyzes the ATP- as well as the pyrophosphate-dependent phosphorylation of a specific serine residue in HPr, a phosphocarrier protein of the phosphoenolpyruvate-dependent sugar phosphotransferase system (PTS). HprK/P also catalyzes the pyrophosphate-producing, inorganic phosphate-dependent dephosphorylation (phosphorolysis) of seryl-phosphorylated HPr (P-Ser-HPr). The two antagonistic activities of HprK/P are regulated by several intracellular metabolites, which change their concentration in response to the absence or presence of rapidly metabolisable carbon sources (glucose, fructose, etc.) in the growth medium. Also phosphorylates/dephosphorylates the HPr-like catabolite repression protein crh on a specific serine residue. Therefore, by controlling the phosphorylation state of HPr and crh, HPrK/P is a sensor enzyme that plays a major role in the regulation of carbon metabolism and sugar transport: it mediates carbon catabolite repression (CCR), and regulates PTS-catalyzed carbohydrate uptake and inducer exclusion. In Bacillus cereus (strain G9842), this protein is HPr kinase/phosphorylase.